Reading from the N-terminus, the 892-residue chain is Isoleucine--tRNA ligase (892 aa).

Residues 60-70 carry the 'HIGH' region motif; that stretch reads PYANGSIHIGH. Glu552 lines the L-isoleucyl-5'-AMP pocket. The short motif at 593–597 is the 'KMSKS' region element; the sequence is KMSKS. ATP is bound at residue Lys596. Residues Cys862, Cys865, Cys879, and Cys882 each coordinate Zn(2+).

The protein belongs to the class-I aminoacyl-tRNA synthetase family. IleS type 1 subfamily. Monomer. The cofactor is Zn(2+).

It is found in the cytoplasm. It catalyses the reaction tRNA(Ile) + L-isoleucine + ATP = L-isoleucyl-tRNA(Ile) + AMP + diphosphate. Functionally, catalyzes the attachment of isoleucine to tRNA(Ile). As IleRS can inadvertently accommodate and process structurally similar amino acids such as valine, to avoid such errors it has two additional distinct tRNA(Ile)-dependent editing activities. One activity is designated as 'pretransfer' editing and involves the hydrolysis of activated Val-AMP. The other activity is designated 'posttransfer' editing and involves deacylation of mischarged Val-tRNA(Ile). This Mycoplasmopsis agalactiae (strain NCTC 10123 / CIP 59.7 / PG2) (Mycoplasma agalactiae) protein is Isoleucine--tRNA ligase.